The following is a 558-amino-acid chain: 2-isopropylmalate synthase (558 aa).

A Pyruvate carboxyltransferase domain is found at 30–303 (PIWCSVDLRD…DPGIDCSDIN (274 aa)). Aspartate 39, histidine 242, histidine 244, and asparagine 278 together coordinate Mg(2+). Residues 437 to 558 (QPGARLKFLD…ANRIVGRKAR (122 aa)) form a regulatory domain region.

The protein belongs to the alpha-IPM synthase/homocitrate synthase family. LeuA type 2 subfamily. As to quaternary structure, homodimer. Requires Mg(2+) as cofactor.

The protein localises to the cytoplasm. It carries out the reaction 3-methyl-2-oxobutanoate + acetyl-CoA + H2O = (2S)-2-isopropylmalate + CoA + H(+). It participates in amino-acid biosynthesis; L-leucine biosynthesis; L-leucine from 3-methyl-2-oxobutanoate: step 1/4. In terms of biological role, catalyzes the condensation of the acetyl group of acetyl-CoA with 3-methyl-2-oxobutanoate (2-ketoisovalerate) to form 3-carboxy-3-hydroxy-4-methylpentanoate (2-isopropylmalate). In Mesorhizobium japonicum (strain LMG 29417 / CECT 9101 / MAFF 303099) (Mesorhizobium loti (strain MAFF 303099)), this protein is 2-isopropylmalate synthase.